The chain runs to 630 residues: MTQNATSETLGFQAEVKQLLHLMIHSLYSNKEIFLRELVSNASDACDKLRFEAIDQPELLAGDSELAIRVSYDKAARTITIADNGIGLSREEAIANLGTIARSGTREFFSQLTGDKQKDAQLIGQFGVGFYSSFIVADRVSVLSRRAGSDEAIRWESDGQGEFSIASAEKATRGTDVVLHLRADEDEFLNGWKLREVLRRYSDHISLPILMRKEEWDADKDEQVTRDEWETVNQANALWTRSKSEISDEQYREFYKTVSHGFDEPLAWTHNRVEGRSEYTQLLYVPRQAPFDLWDRDARRGVKLYVKRVFIMDDAEQLLPAYLRFVRGVIDSADLPLNVSREILQESRDVRAIREGSAKRILSLLEDLAENRKDDYAVFWGEFGQVLKEGVGEDPSNQERIAKLLRFASTHAGDASQTTSLQDYLGRLKEGQDKIYYVTADSYSAASNSPHLEIFRKKGIEVLLLWDRVDEWMLSHLREFEGKSLVSVAKGGLDLADLADEEEKKKQTEVAESFKPLIERLQTALGEQVKEVRVTLRLVDSPACVVVGQNDLSPHLLRMLKAAGQEVPEVKPVLEINPEHALIARIRDVSDADFGAWAQLLLDQALLAEGAQIADPAAFVKRLNALLLKV.

The interval 1–341 (MTQNATSETL…SADLPLNVSR (341 aa)) is a; substrate-binding. Residues 342–558 (EILQESRDVR…QNDLSPHLLR (217 aa)) are b. The c stretch occupies residues 559–630 (MLKAAGQEVP…KRLNALLLKV (72 aa)).

Belongs to the heat shock protein 90 family. In terms of assembly, homodimer.

The protein resides in the cytoplasm. In terms of biological role, molecular chaperone. Has ATPase activity. This chain is Chaperone protein HtpG, found in Bordetella avium (strain 197N).